The chain runs to 260 residues: CD320 antigen (260 aa).

A signal peptide spans 1–28; it reads MARGGAGRAVALGLVLRLLFGLRTGLEA. The Extracellular portion of the chain corresponds to 29–208; the sequence is APAPAHTRVQ…DSSRNPSAYG (180 aa). The LDL-receptor class A 1 domain occupies 46–83; that stretch reads SCPTDTFQCLTSGYCVPLSWRCDGDQDCSDGSDEEDCR. 3 cysteine pairs are disulfide-bonded: C47/C60, C54/C73, and C67/C82. Positions 65, 68, 70, 72, 78, and 79 each coordinate Ca(2+). The N-linked (GlcNAc...) asparagine glycan is linked to N118. The LDL-receptor class A 2 domain occupies 123–160; it reads PCQESELHCILDDVCIPHTWRCDGHPDCLDSSDELSCD. 3 cysteine pairs are disulfide-bonded: C124-C137, C131-C150, and C144-C159. Ca(2+) contacts are provided by W142, D145, H147, D149, D155, and E156. An N-linked (GlcNAc...) asparagine glycan is attached at N185. A helical membrane pass occupies residues 209–229; the sequence is VIAAAGVLSAILVSATLLILL. The Cytoplasmic segment spans residues 230–260; it reads RLRGQGYLPPPGLLVAVKESLLLSERKTSLI.

As to quaternary structure, interacts (via LDL-receptor class A domains) with TCN2.

It is found in the cell membrane. Functionally, receptor for transcobalamin saturated with cobalamin (TCbl). Plays an important role in cobalamin uptake. Plasma membrane protein that is expressed on follicular dendritic cells (FDC) and mediates interaction with germinal center B cells. Functions as a costimulator to promote B cell responses to antigenic stimuli; promotes B cell differentiation and proliferation. Germinal center-B (GC-B) cells differentiate into memory B-cells and plasma cells (PC) through interaction with T-cells and follicular dendritic cells (FDC). CD320 augments the proliferation of PC precursors generated by IL-10. The sequence is that of CD320 antigen (Cd320) from Mus musculus (Mouse).